We begin with the raw amino-acid sequence, 1662 residues long: Cortactin-binding protein 2 (1662 aa).

Disordered stretches follow at residues 1–23 (MATD…AGAA), 202–235 (KKKT…EFDT), 365–439 (IGVS…LHPG), and 453–477 (GNAN…SPTS). Residues 118–275 (RKMQERMSAQ…EQLKRGSDSK (158 aa)) adopt a coiled-coil conformation. Positions 385–395 (PSTGSTPDPTS) are enriched in low complexity. Residues 404–421 (AAPSTAQTPGITPQNSQA) show a composition bias toward polar residues. Arg-497 is subject to Asymmetric dimethylarginine. Positions 498–615 (FTGPQAGAPP…SSPQLPPKPS (118 aa)) are disordered. 2 stretches are compositionally biased toward polar residues: residues 516–529 (DVST…TSVK) and 582–592 (TVASPPSSLPQ). ANK repeat units lie at residues 708-738 (GRPT…DINY), 742-771 (DGHS…QVNA), 775-804 (NGFT…NINH), 808-837 (GGQT…DRSV), and 841-870 (DGWT…PAHG). A disordered region spans residues 871-897 (NSFSEEESESGVFDLDEGEESPEGKSK). Acidic residues predominate over residues 874–891 (SEEESESGVFDLDEGEES). An ANK 6 repeat occupies 911–941 (EGWTAAHIAASKGFKNCLEILCRHGGLETER). Positions 1446–1473 (KKKGESGAWRKVNTSPRRKSGRFSLPTW) are disordered. Ser-1523 is modified (phosphoserine). A disordered region spans residues 1614–1662 (VPRSKVTQCSQNTKRSSSSSNTRQIEINNNSKEENWNLHKNEHLEKPNK). Over residues 1623–1637 (SQNTKRSSSSSNTRQ) the composition is skewed to low complexity. Residues 1644 to 1662 (SKEENWNLHKNEHLEKPNK) are compositionally biased toward basic and acidic residues.

In terms of assembly, interacts with CTTN/cortactin SH3 domain. Interacts with STRN, STRN4/zinedin and MOB4/phocein; this interactions mediate the association with the STRIPAK core complex and may regulate dendritic spine distribution of the STRIPAK complex in hippocampal neurons. Activation of glutamate receptors weakens the interaction with STRN and STRN4.

The protein resides in the cytoplasm. It is found in the cell cortex. It localises to the cell projection. The protein localises to the dendritic spine. Regulates the dendritic spine distribution of CTTN/cortactin in hippocampal neurons, and thus controls dendritic spinogenesis and dendritic spine maintenance. Associates with the striatin-interacting phosphatase and kinase (STRIPAK) core complex to regulate dendritic spine distribution of the STRIPAK complex in hippocampal neurons. The chain is Cortactin-binding protein 2 (CTTNBP2) from Callithrix jacchus (White-tufted-ear marmoset).